Consider the following 380-residue polypeptide: Cytochrome b (380 aa).

4 helical membrane-spanning segments follow: residues 34–54 (FGSLLGICLTTQILTGLLLAM), 78–99 (WLIRNLHANGASFFFICIYLHI), 114–134 (WNTGIILLLTLMATAFVGYVL), and 179–199 (FFALHFLLPFMIAGLTLIHLT). H84 and H98 together coordinate heme b. Residues H183 and H197 each coordinate heme b. Residue H202 coordinates a ubiquinone. The next 4 helical transmembrane spans lie at 227–247 (TKDTLGFALMLLPLTTLALFS), 289–309 (LGGVLALAASVLILFLIPLLH), 321–341 (LSQLLFWTLVANLTILTWIGS), and 348–368 (FIIIGQLASLTYFTILLILFP).

This sequence belongs to the cytochrome b family. The cytochrome bc1 complex contains 11 subunits: 3 respiratory subunits (MT-CYB, CYC1 and UQCRFS1), 2 core proteins (UQCRC1 and UQCRC2) and 6 low-molecular weight proteins (UQCRH/QCR6, UQCRB/QCR7, UQCRQ/QCR8, UQCR10/QCR9, UQCR11/QCR10 and a cleavage product of UQCRFS1). This cytochrome bc1 complex then forms a dimer. Heme b is required as a cofactor.

Its subcellular location is the mitochondrion inner membrane. Its function is as follows. Component of the ubiquinol-cytochrome c reductase complex (complex III or cytochrome b-c1 complex) that is part of the mitochondrial respiratory chain. The b-c1 complex mediates electron transfer from ubiquinol to cytochrome c. Contributes to the generation of a proton gradient across the mitochondrial membrane that is then used for ATP synthesis. In Aptenodytes patagonicus (King penguin), this protein is Cytochrome b (MT-CYB).